Consider the following 478-residue polypeptide: MDTSDLFASCRKGDVGRVRYLLEQRDVEVNVRDKWDSTPLYYACLCGHEELVRYLLANGARCEANTFDGERCLYGALSDPIRRALRDYKQVTASCRRRDYYDDFLQRLLEQGIHSDVVFVVHGKPFRAHRCILGARSTYFANMLDTKWKGKSVVVLRHPLINPVAFGALLQYLYTGRLDIGVEHVSDCERLAKQCQLWDLLDDLEAKCEKVSEFVASKPGTCVKVLTIEPPPADPRLRADMALLADCALPPELRGDLGELPFPCPDGFSSCPDICFRVADSSFLCHKAFFCGRSDYFRALLDDHFRESEEPVASGDPPVVTLHDISPDIFTHVLYYVYSDHTELPPELAYDVLSVADMYLLPGLKRLCGRSLAQLLEEDSVVGVWRIAKLFRLARLEDQCTEYMAKVIEKLVEREDFVEAVREEAAAVAARQETDSIPLVDDIRFHVASTVQTYSAIEEAQQQLRALENLLVSIGLDC.

ANK repeat units lie at residues 1–31 (MDTS…EVNV) and 35–64 (WDST…RCEA). 2 BTB domains span residues 115–182 (SDVV…DIGV) and 272–346 (PDIC…ELPP). Residues 450–478 (TVQTYSAIEEAQQQLRALENLLVSIGLDC) adopt a coiled-coil conformation.

The protein localises to the cytoplasm. Functionally, may act as a mediator of the PTEN growth-suppressive signaling pathway. May play a role in developmental processes. This Rattus norvegicus (Rat) protein is Ankyrin repeat and BTB/POZ domain-containing protein 1.